Reading from the N-terminus, the 246-residue chain is tRNA (guanine-N(1)-)-methyltransferase (246 aa).

Residues Gly-113 and 133-138 (IGDYVL) contribute to the S-adenosyl-L-methionine site.

It belongs to the RNA methyltransferase TrmD family. As to quaternary structure, homodimer.

Its subcellular location is the cytoplasm. The enzyme catalyses guanosine(37) in tRNA + S-adenosyl-L-methionine = N(1)-methylguanosine(37) in tRNA + S-adenosyl-L-homocysteine + H(+). Functionally, specifically methylates guanosine-37 in various tRNAs. This chain is tRNA (guanine-N(1)-)-methyltransferase, found in Haemophilus influenzae (strain 86-028NP).